We begin with the raw amino-acid sequence, 183 residues long: Adenine phosphoribosyltransferase (183 aa).

This sequence belongs to the purine/pyrimidine phosphoribosyltransferase family. As to quaternary structure, homodimer.

Its subcellular location is the cytoplasm. The catalysed reaction is AMP + diphosphate = 5-phospho-alpha-D-ribose 1-diphosphate + adenine. The protein operates within purine metabolism; AMP biosynthesis via salvage pathway; AMP from adenine: step 1/1. Its function is as follows. Catalyzes a salvage reaction resulting in the formation of AMP, that is energically less costly than de novo synthesis. The protein is Adenine phosphoribosyltransferase of Salmonella typhi.